We begin with the raw amino-acid sequence, 137 residues long: Phospholipase A2 group V (137 aa).

The first 20 residues, 1–20, serve as a signal peptide directing secretion; sequence MKRLLTLAWFLACSVPAVPG. 6 disulfide bridges follow: C46–C137, C48–C64, C63–C117, C70–C110, C79–C103, and C97–C108. The Ca(2+) site is built by Y47, G49, and G51. H67 is a catalytic residue. D68 contacts Ca(2+). The active site involves D111.

Belongs to the phospholipase A2 family. Ca(2+) is required as a cofactor. In terms of processing, this enzyme lacks one of the seven disulfide bonds found in similar PA2 proteins.

Its subcellular location is the secreted. It localises to the cell membrane. It is found in the cytoplasmic vesicle. The protein localises to the phagosome. The protein resides in the recycling endosome. Its subcellular location is the golgi apparatus. It localises to the cis-Golgi network. It is found in the trans-Golgi network. It catalyses the reaction a 1,2-diacyl-sn-glycero-3-phosphocholine + H2O = a 1-acyl-sn-glycero-3-phosphocholine + a fatty acid + H(+). The catalysed reaction is 1-hexadecanoyl-2-(9Z-octadecenoyl)-sn-glycero-3-phosphocholine + H2O = 1-hexadecanoyl-sn-glycero-3-phosphocholine + (9Z)-octadecenoate + H(+). It carries out the reaction 1-hexadecanoyl-2-(5Z,8Z,11Z,14Z-eicosatetraenoyl)-sn-glycero-3-phosphocholine + H2O = 1-hexadecanoyl-sn-glycero-3-phosphocholine + (5Z,8Z,11Z,14Z)-eicosatetraenoate + H(+). The enzyme catalyses 1-hexadecanoyl-2-(9Z,12Z-octadecadienoyl)-sn-glycero-3-phosphoethanolamine + H2O = 1-hexadecanoyl-sn-glycero-3-phosphoethanolamine + (9Z,12Z)-octadecadienoate + H(+). It catalyses the reaction 1-hexadecanoyl-2-(5Z,8Z,11Z,14Z-eicosatetraenoyl)-sn-glycero-3-phosphoethanolamine + H2O = 1-hexadecanoyl-sn-glycero-3-phosphoethanolamine + (5Z,8Z,11Z,14Z)-eicosatetraenoate + H(+). The catalysed reaction is 1-octadecanoyl-2-(5Z,8Z,11Z,14Z-eicosatetraenoyl)-sn-glycero-3-phospho-(1D-myo-inositol) + H2O = 1-octadecanoyl-sn-glycero-3-phospho-(1D-myo-inositol) + (5Z,8Z,11Z,14Z)-eicosatetraenoate + H(+). It carries out the reaction 1-hexadecanoyl-2-(9Z-octadecenoyl)-sn-glycero-3-phosphoglycerol + H2O = 1-hexadecanoyl-sn-glycero-3-phosphoglycerol + (9Z)-octadecenoate + H(+). The enzyme catalyses N-hexadecanoyl-1,2-di-(9Z-octadecenoyl)-sn-glycero-3-phosphoethanolamine + H2O = N-hexadecanoyl-1-(9Z-octadecenoyl)-sn-glycero-3-phosphoethanolamine + (9Z)-octadecenoate + H(+). It catalyses the reaction 1'-[1,2-di-(9Z-octadecenoyl)-sn-glycero-3-phospho]-3'-[1-(9Z-octadecenoyl)-sn-glycero-3-phospho]-glycerol + H2O = 1',3'-bis-[1-(9Z-octadecenoyl)-sn-glycero-3-phospho]-glycerol + (9Z)-octadecenoate + H(+). The catalysed reaction is 1',3'-bis[1,2-di-(9Z-octadecenoyl)-sn-glycero-3-phospho]-glycerol + H2O = 1'-[1,2-di-(9Z-octadecenoyl)-sn-glycero-3-phospho]-3'-[1-(9Z-octadecenoyl)-sn-glycero-3-phospho]-glycerol + (9Z)-octadecenoate + H(+). Its pathway is lipid metabolism; phospholipid metabolism. It functions in the pathway lipid metabolism; leukotriene B4 biosynthesis. It participates in lipid metabolism; leukotriene C4 biosynthesis. Its function is as follows. Secretory calcium-dependent phospholipase A2 that primarily targets extracellular phospholipids. Hydrolyzes the ester bond of the fatty acyl group attached at sn-2 position of phospholipids (phospholipase A2 activity), preferentially releasing fatty acyl groups with a low degree of unsaturation such as oleoyl (C18:1) and linoleoyl (C18:2) groups. Hydrolyzes low-density lipoprotein (LDL) phospholipids releasing unsaturated fatty acids that drive macrophage polarization toward an M2 phenotype. May act in an autocrine and paracrine manner. Contributes to lipid remodeling of cellular membranes at different subcellular locations and generation of lipid mediators involved in pathogen clearance. Cleaves sn-2 fatty acyl chains of cardiolipin, a major component of the inner membrane of mitochondria and bacterial membranes. Promotes phagocytosis of bacteria in macrophages through production of lysophosphatidylethanolamines. Displays bactericidal activity against Gram-positive bacteria by directly hydrolyzing phospholipids of the bacterial membrane. Promotes phagocytosis and killing of ingested fungi likely through controlling phagosome-lysosome fusion and phagosome maturation. Plays a role in biosynthesis of cysteinyl leukotrienes (CysLTs) in myeloid cells. In eosinophils, triggers perinuclear arachidonate release and LTC4 synthesis in a PLA2G4A-independent way. In neutrophils, amplifies CysLTs biosynthesis initiated by PLA2G4A. Promotes immune complex clearance in macrophages via stimulating synthesis of CysLTs, which act through CYSLTR1 to trigger phagocytosis. May regulate antigen processing in antigen-presenting cells. In pulmonary macrophages regulates IL33 production required for activation of group 2 innate lymphoid cells. May play a role in the biosynthesis of N-acyl ethanolamines that regulate energy metabolism. Hydrolyzes N-acyl phosphatidylethanolamines to N-acyl lysophosphatidylethanolamines, which are further cleaved by a lysophospholipase D to release N-acyl ethanolamines. This Rattus norvegicus (Rat) protein is Phospholipase A2 group V (Pla2g5).